The chain runs to 150 residues: Phylloplanin (150 aa).

A signal peptide spans 1–23 (MASAKIFLIFLLAALIATPAAFA).

Post-translationally, probably covalently linked to cuticular lipids and/or trichome exudate diterpens or sugar esters in order to increase the solubility in exudate and the dispersion on the leaf surface. In terms of tissue distribution, expressed in small glandular secreting trichomes (SGTs).

It is found in the secreted. Inhibits spore germination and leaf infection by fungal pathogens. The sequence is that of Phylloplanin from Nicotiana tabacum (Common tobacco).